Consider the following 299-residue polypeptide: HTH-type transcriptional repressor CarH (299 aa).

The HTH merR-type domain maps to 5-74; sequence TYRINIAAEL…ISEAAKLLPQ (70 aa). Positions 8–27 form a DNA-binding region, H-T-H motif; sequence INIAAELAGVRVELIRAWER. In terms of domain architecture, B12-binding spans 180–299; it reads HRHGVLACFP…EEDWDRLAGT (120 aa).

The protein belongs to the CarA/CarH B12-binding photoregulator family. In terms of assembly, forms oligomers. Interacts with CarS.

Requires cobalamin (vitamin B12) for repressor activity. In the dark, binding of cobalamin to CarH induces its oligomerization, which enhances binding to the DNA and repressor activity. Light causes cobalamin photolysis and disruption of the cobalamin-CarH complex, which decreases interaction with DNA and allows transcription of the carB operon. Interaction with CarS also prevents binding to DNA. Its function is as follows. Negative regulator of the carB operon in the dark. Binds specifically to the CarA operator, in the region around the carB promoter, which blocks access to the RNA polymerase. The protein is HTH-type transcriptional repressor CarH (carH) of Myxococcus xanthus.